Here is a 396-residue protein sequence, read N- to C-terminus: Flap endonuclease 1 (396 aa).

An N-domain region spans residues 1–105 (MGIHGLTKLL…DQLAQRTERR (105 aa)). Mg(2+) is bound at residue Asp-34. Position 71 (Arg-71) interacts with DNA. Mg(2+) contacts are provided by Asp-87, Glu-159, Glu-161, Asp-180, and Asp-182. Positions 123 to 254 (AIEKYSKRSV…VRALQMIKKH (132 aa)) are I-domain. Residue Glu-159 participates in DNA binding. DNA-binding residues include Gly-232 and Asp-234. Asp-234 lines the Mg(2+) pocket. The interval 338–346 (NQGRLESFF) is interaction with PCNA. The interval 341–396 (RLESFFTSLPKPATADKAKPKEDDKKRKAGAAAGGKDAKGGAAAKKGKFGVGGGKK) is disordered. Residues 354–366 (TADKAKPKEDDKK) are compositionally biased toward basic and acidic residues. Residues 370–384 (GAAAGGKDAKGGAAA) show a composition bias toward low complexity.

This sequence belongs to the XPG/RAD2 endonuclease family. FEN1 subfamily. As to quaternary structure, interacts with PCNA. Three molecules of FEN1 bind to one PCNA trimer with each molecule binding to one PCNA monomer. PCNA stimulates the nuclease activity without altering cleavage specificity. The cofactor is Mg(2+). In terms of processing, phosphorylated. Phosphorylation upon DNA damage induces relocalization to the nuclear plasma.

It localises to the nucleus. It is found in the nucleolus. The protein localises to the nucleoplasm. Its subcellular location is the mitochondrion. Its function is as follows. Structure-specific nuclease with 5'-flap endonuclease and 5'-3' exonuclease activities involved in DNA replication and repair. During DNA replication, cleaves the 5'-overhanging flap structure that is generated by displacement synthesis when DNA polymerase encounters the 5'-end of a downstream Okazaki fragment. It enters the flap from the 5'-end and then tracks to cleave the flap base, leaving a nick for ligation. Also involved in the long patch base excision repair (LP-BER) pathway, by cleaving within the apurinic/apyrimidinic (AP) site-terminated flap. Acts as a genome stabilization factor that prevents flaps from equilibrating into structures that lead to duplications and deletions. Also possesses 5'-3' exonuclease activity on nicked or gapped double-stranded DNA, and exhibits RNase H activity. Also involved in replication and repair of rDNA and in repairing mitochondrial DNA. This is Flap endonuclease 1 from Chlamydomonas reinhardtii (Chlamydomonas smithii).